The primary structure comprises 639 residues: Putative cyclic beta-1,2-glucan modification protein (639 aa).

Transmembrane regions (helical) follow at residues 34-54 (ALFT…IVRW), 69-89 (PAWT…ALFG), 96-116 (LLIA…QVFL), 144-164 (WTAV…ALLL), 185-205 (FALP…FSWI), and 227-247 (FALA…AGYM).

The protein localises to the cell membrane. The chain is Putative cyclic beta-1,2-glucan modification protein (cgmA) from Rhizobium meliloti (strain 1021) (Ensifer meliloti).